The following is a 267-amino-acid chain: Putative phosphoenolpyruvate synthase regulatory protein (267 aa).

147–154 (GVSRSGKT) serves as a coordination point for ADP.

It belongs to the pyruvate, phosphate/water dikinase regulatory protein family. PSRP subfamily.

The catalysed reaction is [pyruvate, water dikinase] + ADP = [pyruvate, water dikinase]-phosphate + AMP + H(+). The enzyme catalyses [pyruvate, water dikinase]-phosphate + phosphate + H(+) = [pyruvate, water dikinase] + diphosphate. In terms of biological role, bifunctional serine/threonine kinase and phosphorylase involved in the regulation of the phosphoenolpyruvate synthase (PEPS) by catalyzing its phosphorylation/dephosphorylation. The protein is Putative phosphoenolpyruvate synthase regulatory protein of Cupriavidus necator (strain ATCC 17699 / DSM 428 / KCTC 22496 / NCIMB 10442 / H16 / Stanier 337) (Ralstonia eutropha).